The primary structure comprises 108 residues: Ig kappa chain V-V region HP 93G7 (108 aa).

The framework-1 stretch occupies residues 1–23 (DIQMTQTTSSLSASLGDRVTISC). A disulfide bridge connects residues C23 and C88. Positions 24–34 (RASQDISNYLN) are complementarity-determining-1. The interval 35 to 49 (WYQQKPDGTVKLLIY) is framework-2. A complementarity-determining-2 region spans residues 50-56 (YTSRLHS). The segment at 57-88 (GVPSRFSGSGSGTDYSLTISNLEQEDIATYFC) is framework-3. The segment at 89 to 97 (QQGNMLPRT) is complementarity-determining-3. A framework-4 region spans residues 98-108 (FGGGTKLEIKR).

This chain is Ig kappa chain V-V region HP 93G7, found in Mus musculus (Mouse).